We begin with the raw amino-acid sequence, 557 residues long: Probable asparagine synthetase [glutamine-hydrolyzing] (557 aa).

Residue Cys2 is the For GATase activity of the active site. The Glutamine amidotransferase type-2 domain occupies 2–188 (CGILAVHHVA…PGHYYDSETK (187 aa)). L-glutamine-binding positions include 50-54 (RLAIV), 75-77 (NGE), and Asp99. In terms of domain architecture, Asparagine synthetase spans 196–531 (PSWWDENKIP…PRQCADTVMR (336 aa)). ATP is bound by residues Leu235, Ile280, and 354–355 (SG). Ser391 and Ser489 each carry phosphoserine.

It localises to the cytoplasm. It is found in the nucleus. It carries out the reaction L-aspartate + L-glutamine + ATP + H2O = L-asparagine + L-glutamate + AMP + diphosphate + H(+). It participates in amino-acid biosynthesis; L-asparagine biosynthesis; L-asparagine from L-aspartate (L-Gln route): step 1/1. This is Probable asparagine synthetase [glutamine-hydrolyzing] (asn1) from Schizosaccharomyces pombe (strain 972 / ATCC 24843) (Fission yeast).